Reading from the N-terminus, the 1627-residue chain is DNA topoisomerase 2-beta (1627 aa).

ATP-binding positions include asparagine 117, asparagine 146, serine 174–asparagine 176, and glycine 187–lysine 194. The interaction with DNA stretch occupies residues lysine 368 to lysine 370. ATP is bound at residue glutamine 402–lysine 404. The Toprim domain occupies cysteine 481–glutamate 598. Glutamate 487, aspartate 567, and aspartate 569 together coordinate Mg(2+). The 454-residue stretch at isoleucine 741–leucine 1194 folds into the Topo IIA-type catalytic domain. The O-(5'-phospho-DNA)-tyrosine intermediate role is filled by tyrosine 831. An interaction with DNA region spans residues lysine 1016–serine 1025. 4 disordered regions span residues alanine 1115–serine 1144, lysine 1224–valine 1248, glutamate 1283–leucine 1365, and aspartate 1378–asparagine 1627. Residues asparagine 1131 to serine 1144 show a composition bias toward low complexity. Residues threonine 1296–lysine 1305 are compositionally biased toward polar residues. Residues proline 1339–serine 1349 are compositionally biased toward basic and acidic residues. Composition is skewed to acidic residues over residues lysine 1381–alanine 1392 and arginine 1412–aspartate 1428. Composition is skewed to basic and acidic residues over residues proline 1436–glutamine 1448 and lysine 1462–aspartate 1471. Basic residues-rich tracts occupy residues glycine 1542–threonine 1552 and lysine 1566–lysine 1578. Residues glutamate 1616 to asparagine 1627 are compositionally biased toward acidic residues.

The protein belongs to the type II topoisomerase family. As to quaternary structure, homodimer. It depends on Mg(2+) as a cofactor. Requires Mn(2+) as cofactor. Ca(2+) serves as cofactor.

The protein resides in the nucleus. It is found in the nucleolus. Its subcellular location is the nucleoplasm. It catalyses the reaction ATP-dependent breakage, passage and rejoining of double-stranded DNA.. Functionally, key decatenating enzyme that alters DNA topology by binding to two double-stranded DNA molecules, generating a double-stranded break in one of the strands, passing the intact strand through the broken strand, and religating the broken strand. Plays a role in B-cell differentiation. This chain is DNA topoisomerase 2-beta (TOP2B), found in Gallus gallus (Chicken).